A 348-amino-acid polypeptide reads, in one-letter code: uncharacterized protein (348 aa).

This is an uncharacterized protein from Geobacillus kaustophilus (strain HTA426).